Consider the following 557-residue polypeptide: MSLIKKKNKDIRIIPLGGVGEIAKNMYIVEVDDEMFMLDAGLMFPEDEMLGIDIVIPDISYVLENKEKLKGIFLTHGHEHAIGAVSYVLEQLDAPVYGSKLTIALIKENMKARNIDKKVRYYTVNNDSIMRFKNVNISFFNTTHSIPDSLGVCIHTSYGAIVYTGEFKFDQSLHGHYAPDIKRMAEIGEEGVFVLISDSTEAEKPGYNTPENVIEHHMYDAFAKVRGRLIVSCYASNFIRIQQVLNIASKLNRKVSFLGRSLESSFNIARKMGYFDIPKDLLIPITEVDNYPKNEVIIIATGMQGEPVEALSQMAQHKHKIMNIEEGDSVFLAITASANMEVIIANTLNELVRAGAHIIPNNKKIHASSHGCMEELKMMINIMKPEYFIPVQGEFKMQIAHAKLAAEAGVAPEKIFLVEKGDVINYNGKDMILNEKVNSGNILIDGIGIGDVGNIVLRDRHLLAEDGIFIAVVTLDPKNRRIAAGPEIQSRGFVYVRESEDLLREAEEKVREIVEAGLQEKRIEWSEIKQNMRDQISKLLFESTKRRPMIIPVISEI.

The Zn(2+) site is built by His76, His78, His144, and Glu166. 366–370 (HASSH) lines the substrate pocket.

It belongs to the metallo-beta-lactamase superfamily. RNA-metabolizing metallo-beta-lactamase-like family. Bacterial RNase J subfamily. Homodimer, may be a subunit of the RNA degradosome. The cofactor is Zn(2+).

Its subcellular location is the cytoplasm. In terms of biological role, an RNase that has 5'-3' exonuclease and possibly endoonuclease activity. Involved in maturation of rRNA and in some organisms also mRNA maturation and/or decay. The polypeptide is Ribonuclease J 2 (Staphylococcus aureus (strain MRSA252)).